The chain runs to 347 residues: Ribosomal RNA small subunit methyltransferase C (347 aa).

Belongs to the methyltransferase superfamily. RsmC family. In terms of assembly, monomer.

It is found in the cytoplasm. The catalysed reaction is guanosine(1207) in 16S rRNA + S-adenosyl-L-methionine = N(2)-methylguanosine(1207) in 16S rRNA + S-adenosyl-L-homocysteine + H(+). Functionally, specifically methylates the guanine in position 1207 of 16S rRNA in the 30S particle. In Shewanella baltica (strain OS155 / ATCC BAA-1091), this protein is Ribosomal RNA small subunit methyltransferase C.